The primary structure comprises 381 residues: GDP-mannose transporter (381 aa).

Residues 1 to 40 are Cytoplasmic-facing; that stretch reads MADDKKTNDYTVEMDKLDQGSKNFEAPLPPVQPRSAPNAQ. Residues 41 to 61 form a helical membrane-spanning segment; the sequence is LANNPILPVLAYCGSSIMMTV. The Lumenal segment spans residues 62 to 71; sequence MNKYVLSGTD. The helical transmembrane segment at 72 to 92 threads the bilayer; sequence FNLNFLLLCVQSIVCIVAIQT. Residues 93–110 are Cytoplasmic-facing; that stretch reads CKASKLITYRDFNADEAK. A helical membrane pass occupies residues 111–127; sequence KWFPITLLLIGMIYTGS. Residues 128–134 lie on the Lumenal side of the membrane; sequence KALQFLS. The chain crosses the membrane as a helical span at residues 135–151; sequence IPVYTIFKNLTIILIAY. Topologically, residues 152-160 are cytoplasmic; it reads GEVLWFGGS. A helical transmembrane segment spans residues 161 to 182; it reads VTGLTLFSFGLMVLSSIIAAWA. The Lumenal portion of the chain corresponds to 183 to 200; sequence DIKHAVESSGDATAKVST. A helical membrane pass occupies residues 201-221; it reads LNAGYIWMLINCLCTSSYVLG. Over 222–233 the chain is Cytoplasmic; that stretch reads MRKRIKLTNFKD. The chain crosses the membrane as a helical span at residues 234–254; it reads FDTMFYNNLLSIPVLLVLTFL. Residues 255-274 are Lumenal-facing; it reads MEDWSSANITRNFPPADRNG. N-linked (GlcNAc...) asparagine glycosylation is present at Asn-262. A helical membrane pass occupies residues 275–295; it reads IMFAMILSGLSSVFISYTSAW. Over 296-303 the chain is Cytoplasmic; that stretch reads CVRVTSST. The helical transmembrane segment at 304–324 threads the bilayer; it reads TYSMVGALNKLPIAVSGLIFF. At 325-327 the chain is on the lumenal side; the sequence is DAP. A helical membrane pass occupies residues 328–348; sequence VTFPSVSAIVVGFVSGIVYAV. At 349 to 381 the chain is on the cytoplasmic side; that stretch reads AKIKQNAKPKTGVLPTSNPVSASSQSMRDSLRS. The disordered stretch occupies residues 362-381; the sequence is LPTSNPVSASSQSMRDSLRS.

Belongs to the TPT transporter family. SLC35D subfamily. As to quaternary structure, homooligomer.

The protein localises to the golgi apparatus membrane. It is found in the cytoplasmic vesicle membrane. Its subcellular location is the endoplasmic reticulum membrane. Involved in the import of GDP-mannose from the cytoplasm into the Golgi lumen. The chain is GDP-mannose transporter (gmt1) from Aspergillus clavatus (strain ATCC 1007 / CBS 513.65 / DSM 816 / NCTC 3887 / NRRL 1 / QM 1276 / 107).